We begin with the raw amino-acid sequence, 434 residues long: UDP-N-acetylglucosamine 1-carboxyvinyltransferase (434 aa).

22 to 23 (KN) is a binding site for phosphoenolpyruvate. Arg99 is a UDP-N-acetyl-alpha-D-glucosamine binding site. The Proton donor role is filled by Cys123. Cys123 is modified (2-(S-cysteinyl)pyruvic acid O-phosphothioketal). UDP-N-acetyl-alpha-D-glucosamine-binding positions include 128 to 132 (RPVDQ), Asp317, and Ile339.

The protein belongs to the EPSP synthase family. MurA subfamily.

It localises to the cytoplasm. It carries out the reaction phosphoenolpyruvate + UDP-N-acetyl-alpha-D-glucosamine = UDP-N-acetyl-3-O-(1-carboxyvinyl)-alpha-D-glucosamine + phosphate. It participates in cell wall biogenesis; peptidoglycan biosynthesis. Cell wall formation. Adds enolpyruvyl to UDP-N-acetylglucosamine. The polypeptide is UDP-N-acetylglucosamine 1-carboxyvinyltransferase (Paracidovorax citrulli (strain AAC00-1) (Acidovorax citrulli)).